Consider the following 418-residue polypeptide: CinA-like protein (418 aa).

Belongs to the CinA family.

The chain is CinA-like protein from Leptospira interrogans serogroup Icterohaemorrhagiae serovar copenhageni (strain Fiocruz L1-130).